Here is a 1011-residue protein sequence, read N- to C-terminus: E3 ubiquitin-protein ligase mib1 (1011 aa).

An MIB/HERC2 1 domain is found at 6–74 (NNRVMVEGVG…AYDLRIMDSA (69 aa)). The segment at 80-132 (HDGTMCDTCRQQPIIGIRWKCAECTNYDLCTVCYHGDKHHLRHRFYRITTPGS) adopts a ZZ-type zinc-finger fold. Residues C85, C88, C100, C103, C109, C112, H118, and H122 each coordinate Zn(2+). Positions 143–221 (SKKITARGIF…MSDLKCVQDA (79 aa)) constitute an MIB/HERC2 2 domain. 9 ANK repeats span residues 430-460 (DLNE…DVNG), 463-492 (AGHT…DVEA), 496-525 (DGDR…DLNA), 529-558 (RRQT…HPSL), 562-591 (EGDT…DVTI), 595-627 (NGFN…IVDE), 631-661 (DGYT…NLDI), 665-694 (NQQT…KLDI), and 698-729 (DGDT…KVDT). 2 RING-type zinc fingers span residues 820–855 (CMVC…LLCK) and 867–902 (CVVC…VQCR). Residues 936–963 (QKDKDNTNVNADVQKLQQQLQDIKEQTM) are a coiled coil. The RING-type 3 zinc-finger motif lies at 964 to 997 (CPVCLDRLKNMIFMCGHGTCQLCGDRMSECPICR).

The protein localises to the cytoplasm. Its subcellular location is the cytoskeleton. It is found in the microtubule organizing center. The protein resides in the centrosome. It localises to the centriolar satellite. The enzyme catalyses S-ubiquitinyl-[E2 ubiquitin-conjugating enzyme]-L-cysteine + [acceptor protein]-L-lysine = [E2 ubiquitin-conjugating enzyme]-L-cysteine + N(6)-ubiquitinyl-[acceptor protein]-L-lysine.. It functions in the pathway protein modification; protein ubiquitination. In terms of biological role, E3 ubiquitin-protein ligase that mediates ubiquitination of Delta receptors, which act as ligands of Notch proteins. Positively regulates the Delta-mediated Notch signaling by ubiquitinating the intracellular domain of Delta, leading to endocytosis of Delta receptors. The chain is E3 ubiquitin-protein ligase mib1 (mib1) from Xenopus laevis (African clawed frog).